The chain runs to 374 residues: Glutamate 5-kinase (374 aa).

Lys-16 contacts ATP. Substrate is bound by residues Ser-56, Asp-143, and Asn-155. ATP is bound at residue 175-176 (TD). In terms of domain architecture, PUA spans 282 to 360 (RGRVVLDAGA…SEIEAVLGYV (79 aa)).

Belongs to the glutamate 5-kinase family.

It is found in the cytoplasm. It catalyses the reaction L-glutamate + ATP = L-glutamyl 5-phosphate + ADP. Its pathway is amino-acid biosynthesis; L-proline biosynthesis; L-glutamate 5-semialdehyde from L-glutamate: step 1/2. Its function is as follows. Catalyzes the transfer of a phosphate group to glutamate to form L-glutamate 5-phosphate. The sequence is that of Glutamate 5-kinase from Ralstonia pickettii (strain 12J).